The following is a 137-amino-acid chain: Pro-corazonin (137 aa).

The N-terminal stretch at 1-20 (MKHVFSTSLIVSLFVIFTDA) is a signal peptide. A Pyrrolidone carboxylic acid modification is found at Gln-21. Asn-31 carries the post-translational modification Asparagine amide. Residues 68–137 (FLKSPCDVRL…RLLNDGMHRL (70 aa)) constitute a propeptide that is removed on maturation.

Belongs to the corazonin family.

It localises to the secreted. Functionally, cardioactive peptide. Corazonin is probably involved in the physiological regulation of the heart beat. This Aedes aegypti (Yellowfever mosquito) protein is Pro-corazonin.